We begin with the raw amino-acid sequence, 499 residues long: Glutamyl-tRNA(Gln) amidotransferase subunit A (499 aa).

Residues Lys79 and Ser154 each act as charge relay system in the active site. Ser178 functions as the Acyl-ester intermediate in the catalytic mechanism.

The protein belongs to the amidase family. GatA subfamily. In terms of assembly, heterotrimer of A, B and C subunits.

It carries out the reaction L-glutamyl-tRNA(Gln) + L-glutamine + ATP + H2O = L-glutaminyl-tRNA(Gln) + L-glutamate + ADP + phosphate + H(+). Functionally, allows the formation of correctly charged Gln-tRNA(Gln) through the transamidation of misacylated Glu-tRNA(Gln) in organisms which lack glutaminyl-tRNA synthetase. The reaction takes place in the presence of glutamine and ATP through an activated gamma-phospho-Glu-tRNA(Gln). This Psychrobacter sp. (strain PRwf-1) protein is Glutamyl-tRNA(Gln) amidotransferase subunit A.